A 310-amino-acid chain; its full sequence is Ribosomal protein uL3 glutamine methyltransferase (310 aa).

The protein belongs to the protein N5-glutamine methyltransferase family. PrmB subfamily.

It catalyses the reaction L-glutaminyl-[ribosomal protein uL3] + S-adenosyl-L-methionine = N(5)-methyl-L-glutaminyl-[ribosomal protein uL3] + S-adenosyl-L-homocysteine + H(+). Functionally, methylates large ribosomal subunit protein uL3 on a specific glutamine residue. This Vibrio anguillarum (strain ATCC 68554 / 775) (Listonella anguillarum) protein is Ribosomal protein uL3 glutamine methyltransferase.